The sequence spans 185 residues: Homeobox expressed in ES cells 1 (185 aa).

Positions 108–167 form a DNA-binding region, homeobox; it reads GRRPRTAFTQNQIEVLENVFRVNCYPGIDIREDLAQKLNLEEDRIQIWFQNRRAKLKRSH.

Belongs to the ANF homeobox family. In terms of assembly, can form heterodimers with PROP1 in binding to DNA. Interacts with TLE1.

The protein localises to the nucleus. Its function is as follows. Required for the normal development of the forebrain, eyes and other anterior structures such as the olfactory placodes and pituitary gland. Possible transcriptional repressor. Binds to the palindromic PIII sequence, 5'-AGCTTGAGTCTAATTGAATTAACTGTAC-3'. HESX1 and PROP1 bind as heterodimers on this palindromic site, and, in vitro, HESX1 can antagonize PROP1 activation. This chain is Homeobox expressed in ES cells 1 (HESX1), found in Pan troglodytes (Chimpanzee).